A 299-amino-acid chain; its full sequence is Oxygen-dependent coproporphyrinogen-III oxidase (299 aa).

Substrate is bound at residue S92. The a divalent metal cation site is built by H96 and H106. The active-site Proton donor is H106. Position 108 to 110 (108 to 110) interacts with substrate; that stretch reads NVR. A divalent metal cation-binding residues include H145 and H175. Residues 240–275 are important for dimerization; sequence YVEFNLVWDRGTLFGLQTGGRTESILMSMPPLVRWE. A substrate-binding site is contributed by 258 to 260; that stretch reads GGR.

Belongs to the aerobic coproporphyrinogen-III oxidase family. In terms of assembly, homodimer. Requires a divalent metal cation as cofactor.

Its subcellular location is the cytoplasm. The enzyme catalyses coproporphyrinogen III + O2 + 2 H(+) = protoporphyrinogen IX + 2 CO2 + 2 H2O. The protein operates within porphyrin-containing compound metabolism; protoporphyrin-IX biosynthesis; protoporphyrinogen-IX from coproporphyrinogen-III (O2 route): step 1/1. Involved in the heme biosynthesis. Catalyzes the aerobic oxidative decarboxylation of propionate groups of rings A and B of coproporphyrinogen-III to yield the vinyl groups in protoporphyrinogen-IX. The chain is Oxygen-dependent coproporphyrinogen-III oxidase from Klebsiella pneumoniae (strain 342).